The chain runs to 492 residues: Bifunctional purine biosynthesis protein PurH (492 aa).

The MGS-like domain maps to 1 to 144 (MKKAILSVSN…KNYKHVTTIV (144 aa)).

Belongs to the PurH family.

It catalyses the reaction (6R)-10-formyltetrahydrofolate + 5-amino-1-(5-phospho-beta-D-ribosyl)imidazole-4-carboxamide = 5-formamido-1-(5-phospho-D-ribosyl)imidazole-4-carboxamide + (6S)-5,6,7,8-tetrahydrofolate. The enzyme catalyses IMP + H2O = 5-formamido-1-(5-phospho-D-ribosyl)imidazole-4-carboxamide. It participates in purine metabolism; IMP biosynthesis via de novo pathway; 5-formamido-1-(5-phospho-D-ribosyl)imidazole-4-carboxamide from 5-amino-1-(5-phospho-D-ribosyl)imidazole-4-carboxamide (10-formyl THF route): step 1/1. It functions in the pathway purine metabolism; IMP biosynthesis via de novo pathway; IMP from 5-formamido-1-(5-phospho-D-ribosyl)imidazole-4-carboxamide: step 1/1. This is Bifunctional purine biosynthesis protein PurH from Staphylococcus aureus (strain JH1).